We begin with the raw amino-acid sequence, 208 residues long: MSDENRLVAAVRTEFGKGAARRARRDGQVPAVLYGHGEDPRHLNVPSREFAAILRAHGTNAVLTLDIDGKEQVALTKSVVVHPIRNYIEHADLLVIKKGEKVTVDVPVVVTGEAASGTLVAQDAATVSLEADALHIPEQIEVSVEGLEVGTQILANQLELPKGATLQADEELLIVNVVAAPTAADLEEETGEAEGETAAAPAEEGAES.

A compositionally biased stretch (acidic residues) spans 185 to 195 (DLEEETGEAEG). Residues 185–208 (DLEEETGEAEGETAAAPAEEGAES) are disordered. Residues 196–208 (ETAAAPAEEGAES) are compositionally biased toward low complexity.

This sequence belongs to the bacterial ribosomal protein bL25 family. CTC subfamily. Part of the 50S ribosomal subunit; part of the 5S rRNA/L5/L18/L25 subcomplex. Contacts the 5S rRNA. Binds to the 5S rRNA independently of L5 and L18.

In terms of biological role, this is one of the proteins that binds to the 5S RNA in the ribosome where it forms part of the central protuberance. This chain is Large ribosomal subunit protein bL25, found in Rhodococcus opacus (strain B4).